Reading from the N-terminus, the 272-residue chain is Pyridoxal phosphate phosphatase YbhA (272 aa).

Catalysis depends on D9, which acts as the Nucleophile. Residue D9 participates in Mg(2+) binding. L10 is a phosphate binding site. D11 lines the Mg(2+) pocket. Residues 43–44 (TG) and K200 contribute to the phosphate site. D223 is a binding site for Mg(2+). N226 provides a ligand contact to phosphate.

Belongs to the HAD-like hydrolase superfamily. CbbY/CbbZ/Gph/YieH family. Mg(2+) serves as cofactor. The cofactor is Mn(2+). Requires Co(2+) as cofactor. Zn(2+) is required as a cofactor.

It carries out the reaction pyridoxal 5'-phosphate + H2O = pyridoxal + phosphate. Its function is as follows. Catalyzes the dephosphorylation of pyridoxal-phosphate (PLP). Can also hydrolyze erythrose-4-phosphate (Ery4P) and fructose-1,6-bis-phosphate (Fru1,6bisP). The sequence is that of Pyridoxal phosphate phosphatase YbhA (ybhA) from Escherichia coli (strain K12).